The chain runs to 145 residues: D-aminoacyl-tRNA deacylase (145 aa).

Residues 137 to 138 (GP) carry the Gly-cisPro motif, important for rejection of L-amino acids motif.

It belongs to the DTD family. As to quaternary structure, homodimer.

It localises to the cytoplasm. The enzyme catalyses glycyl-tRNA(Ala) + H2O = tRNA(Ala) + glycine + H(+). It carries out the reaction a D-aminoacyl-tRNA + H2O = a tRNA + a D-alpha-amino acid + H(+). Functionally, an aminoacyl-tRNA editing enzyme that deacylates mischarged D-aminoacyl-tRNAs. Also deacylates mischarged glycyl-tRNA(Ala), protecting cells against glycine mischarging by AlaRS. Acts via tRNA-based rather than protein-based catalysis; rejects L-amino acids rather than detecting D-amino acids in the active site. By recycling D-aminoacyl-tRNA to D-amino acids and free tRNA molecules, this enzyme counteracts the toxicity associated with the formation of D-aminoacyl-tRNA entities in vivo and helps enforce protein L-homochirality. This chain is D-aminoacyl-tRNA deacylase, found in Pseudomonas aeruginosa (strain UCBPP-PA14).